A 435-amino-acid polypeptide reads, in one-letter code: Eukaryotic peptide chain release factor subunit 1-3 (435 aa).

Residue alanine 2 is modified to N-acetylalanine.

The protein belongs to the eukaryotic release factor 1 family. In terms of assembly, heterodimer of two subunits, one of which binds GTP.

It localises to the cytoplasm. In terms of biological role, directs the termination of nascent peptide synthesis (translation) in response to the termination codons UAA, UAG and UGA. Modulates plant growth and development. The sequence is that of Eukaryotic peptide chain release factor subunit 1-3 (ERF1-3) from Arabidopsis thaliana (Mouse-ear cress).